A 226-amino-acid chain; its full sequence is Nucleoside triphosphate pyrophosphatase (226 aa).

Residue D79 is the Proton acceptor of the active site. The interval 204-226 is disordered; that stretch reads WSRGTSTHPTPGTSATPKPNPGA. A compositionally biased stretch (polar residues) spans 206–220; that stretch reads RGTSTHPTPGTSATP.

It belongs to the Maf family. A divalent metal cation is required as a cofactor.

The protein localises to the cytoplasm. The catalysed reaction is a ribonucleoside 5'-triphosphate + H2O = a ribonucleoside 5'-phosphate + diphosphate + H(+). The enzyme catalyses a 2'-deoxyribonucleoside 5'-triphosphate + H2O = a 2'-deoxyribonucleoside 5'-phosphate + diphosphate + H(+). Its function is as follows. Nucleoside triphosphate pyrophosphatase. May have a dual role in cell division arrest and in preventing the incorporation of modified nucleotides into cellular nucleic acids. The sequence is that of Nucleoside triphosphate pyrophosphatase from Salinispora tropica (strain ATCC BAA-916 / DSM 44818 / JCM 13857 / NBRC 105044 / CNB-440).